We begin with the raw amino-acid sequence, 106 residues long: Toxin-like structure LSTX-D3 (106 aa).

The N-terminal stretch at methionine 1–serine 20 is a signal peptide. A propeptide spanning residues glutamate 21–arginine 41 is cleaved from the precursor. Intrachain disulfides connect cysteine 45–cysteine 60, cysteine 52–cysteine 69, cysteine 59–cysteine 85, and cysteine 71–cysteine 83.

It belongs to the neurotoxin 19 (CSTX) family. 02 (D7) subfamily. Expressed by the venom gland.

The protein resides in the secreted. In Lycosa singoriensis (Wolf spider), this protein is Toxin-like structure LSTX-D3.